The chain runs to 79 residues: ATP synthase subunit c (79 aa).

2 helical membrane-spanning segments follow: residues 7-27 (VSGM…GAGI) and 56-76 (IGSA…LFLI).

The protein belongs to the ATPase C chain family. As to quaternary structure, F-type ATPases have 2 components, F(1) - the catalytic core - and F(0) - the membrane proton channel. F(1) has five subunits: alpha(3), beta(3), gamma(1), delta(1), epsilon(1). F(0) has three main subunits: a(1), b(2) and c(10-14). The alpha and beta chains form an alternating ring which encloses part of the gamma chain. F(1) is attached to F(0) by a central stalk formed by the gamma and epsilon chains, while a peripheral stalk is formed by the delta and b chains.

Its subcellular location is the cell membrane. F(1)F(0) ATP synthase produces ATP from ADP in the presence of a proton or sodium gradient. F-type ATPases consist of two structural domains, F(1) containing the extramembraneous catalytic core and F(0) containing the membrane proton channel, linked together by a central stalk and a peripheral stalk. During catalysis, ATP synthesis in the catalytic domain of F(1) is coupled via a rotary mechanism of the central stalk subunits to proton translocation. Its function is as follows. Key component of the F(0) channel; it plays a direct role in translocation across the membrane. A homomeric c-ring of between 10-14 subunits forms the central stalk rotor element with the F(1) delta and epsilon subunits. This is ATP synthase subunit c from Clostridium botulinum (strain Hall / ATCC 3502 / NCTC 13319 / Type A).